A 467-amino-acid polypeptide reads, in one-letter code: ATP synthase subunit beta (467 aa).

157–164 contacts ATP; it reads GGAGVGKT.

The protein belongs to the ATPase alpha/beta chains family. In terms of assembly, F-type ATPases have 2 components, CF(1) - the catalytic core - and CF(0) - the membrane proton channel. CF(1) has five subunits: alpha(3), beta(3), gamma(1), delta(1), epsilon(1). CF(0) has three main subunits: a(1), b(2) and c(9-12). The alpha and beta chains form an alternating ring which encloses part of the gamma chain. CF(1) is attached to CF(0) by a central stalk formed by the gamma and epsilon chains, while a peripheral stalk is formed by the delta and b chains.

It is found in the cell inner membrane. The catalysed reaction is ATP + H2O + 4 H(+)(in) = ADP + phosphate + 5 H(+)(out). Functionally, produces ATP from ADP in the presence of a proton gradient across the membrane. The catalytic sites are hosted primarily by the beta subunits. The chain is ATP synthase subunit beta from Desulfosudis oleivorans (strain DSM 6200 / JCM 39069 / Hxd3) (Desulfococcus oleovorans).